The chain runs to 137 residues: Keratin-associated protein 15-1 (137 aa).

This sequence belongs to the PMG family. Interacts with hair keratins.

Functionally, in the hair cortex, hair keratin intermediate filaments are embedded in an interfilamentous matrix, consisting of hair keratin-associated proteins (KRTAP), which are essential for the formation of a rigid and resistant hair shaft through their extensive disulfide bond cross-linking with abundant cysteine residues of hair keratins. The matrix proteins include the high-sulfur and high-glycine-tyrosine keratins. The protein is Keratin-associated protein 15-1 (KRTAP15-1) of Homo sapiens (Human).